We begin with the raw amino-acid sequence, 270 residues long: MWNSGFESFSSSTYGGAGGYTQSPGGFGSPTPSQAEKKSRVRAQHIVPCTISQLLSATLTDEVFRIGDVEISQVTIVGIIRHAEKAPTNIVYKIDDMTAPPMDVRQWVDTDDASGENAVVPPETYVKVAGHLRSFQNKKSLVAFKIIPLEDMNEFTAHILEVVNSHMMLSKPNSQASAGRPSMSNPGMSEPGNFSGNNFMPANGLTVVQNQVLNLIKACPRPEGLNFQDLRSQLQHMPVPSIKQAVDFLCNEGHIYSTVDDDHFKSTDAE.

M1 carries the N-acetylmethionine modification. S4 and S8 each carry phosphoserine; by PRKDC. The interval 20–41 (YTQSPGGFGSPTPSQAEKKSRV) is disordered. T21 carries the post-translational modification Phosphothreonine; by PRKDC. The residue at position 23 (S23) is a Phosphoserine; by CDK2. Phosphoserine; by CDK1 is present on S29. A Phosphoserine; by PRKDC modification is found at S33. Glycyl lysine isopeptide (Lys-Gly) (interchain with G-Cter in ubiquitin) cross-links involve residues K37 and K38. The segment at residues 74–148 (VTIVGIIRHA…KSLVAFKIIP (75 aa)) is a DNA-binding region (OB). A disordered region spans residues 171–192 (KPNSQASAGRPSMSNPGMSEPG). The interaction with RAD52, TIPIN, UNG and XPA stretch occupies residues 187-270 (GMSEPGNFSG…DDHFKSTDAE (84 aa)).

This sequence belongs to the replication factor A protein 2 family. As to quaternary structure, component of the replication protein A complex (RPA/RP-A), a heterotrimeric complex composed of RPA1, RPA2 and RPA3. Interacts with PRPF19; the PRP19-CDC5L complex is recruited to the sites of DNA repair where it ubiquitinates the replication protein A complex (RPA). Interacts with SERTAD3. Interacts with TIPIN. Interacts with TIMELESS. Interacts with PPP4R2; the interaction is direct, DNA damage-dependent and mediates the recruitment of the PP4 catalytic subunit PPP4C. Interacts (hyperphosphorylated) with RAD51. Interacts with SMARCAL1; the interaction is direct and mediates the recruitment to the RPA complex of SMARCAL1. Interacts with RAD52 and XPA; those interactions are direct and associate RAD52 and XPA to the RPA complex. Interacts with FBH1. Interacts with ETAA1; the interaction is direct and promotes ETAA1 recruitment at stalled replication forks. Interacts with DDI2. Interacts (in unphosphorylated form via N-terminus) with EIF4EBP3; the interaction enhances EIF4EBP3-mediated inhibition of EIF4E-mediated mRNA nuclear export. Interacts with nuclear UNG (isoform 2); this interaction mediates UNG recruitment to RPA-coated single-stranded DNA at stalled replication forks. Post-translationally, differentially phosphorylated throughout the cell cycle, becoming phosphorylated at the G1-S transition and dephosphorylated in late mitosis. Mainly phosphorylated at Ser-23 and Ser-29, by cyclin A-CDK2 and cyclin B-CDK1, respectively during DNA replication and mitosis. Dephosphorylation may require the serine/threonine-protein phosphatase 4. Phosphorylation at Ser-23 and Ser-29 is a prerequisite for further phosphorylation. Becomes hyperphosphorylated on additional residues including Ser-4, Ser-8, Thr-21 and Ser-33 in response to DNA damage. Hyperphosphorylation is mediated by ATM, ATR and PRKDC. Primarily recruited to DNA repair nuclear foci as a hypophosphorylated form it undergoes subsequent hyperphosphorylation, catalyzed by ATR. Hyperphosphorylation is required for RAD51 recruitment to chromatin and efficient DNA repair. Phosphorylation at Thr-21 depends upon RFWD3 presence. In terms of processing, DNA damage-induced 'Lys-63'-linked polyubiquitination by PRPF19 mediates ATRIP recruitment to the RPA complex at sites of DNA damage and activation of ATR. Ubiquitinated by RFWD3 at stalled replication forks in response to DNA damage: ubiquitination by RFWD3 does not lead to degradation by the proteasome and promotes removal of the RPA complex from stalled replication forks, promoting homologous recombination.

It is found in the nucleus. It localises to the PML body. Its function is as follows. As part of the heterotrimeric replication protein A complex (RPA/RP-A), binds and stabilizes single-stranded DNA intermediates, that form during DNA replication or upon DNA stress. It prevents their reannealing and in parallel, recruits and activates different proteins and complexes involved in DNA metabolism. Thereby, it plays an essential role both in DNA replication and the cellular response to DNA damage. In the cellular response to DNA damage, the RPA complex controls DNA repair and DNA damage checkpoint activation. Through recruitment of ATRIP activates the ATR kinase a master regulator of the DNA damage response. It is required for the recruitment of the DNA double-strand break repair factors RAD51 and RAD52 to chromatin in response to DNA damage. Also recruits to sites of DNA damage proteins like XPA and XPG that are involved in nucleotide excision repair and is required for this mechanism of DNA repair. Also plays a role in base excision repair (BER) probably through interaction with UNG. Also recruits SMARCAL1/HARP, which is involved in replication fork restart, to sites of DNA damage. May also play a role in telomere maintenance. The protein is Replication protein A 32 kDa subunit of Mus musculus (Mouse).